The sequence spans 506 residues: Maturase K (506 aa).

Belongs to the intron maturase 2 family. MatK subfamily.

The protein localises to the plastid. Its subcellular location is the chloroplast. In terms of biological role, usually encoded in the trnK tRNA gene intron. Probably assists in splicing its own and other chloroplast group II introns. This chain is Maturase K, found in Calluna vulgaris (Heather).